A 1017-amino-acid chain; its full sequence is Stereoselective keto-reductase af490 (1017 aa).

Positions 6-138 (NELSGSQVPG…GRLRMTFAGH (133 aa)) are N-terminal hotdog fold. Residues 6–311 (NELSGSQVPG…MSPIAPSTEK (306 aa)) form the PKS/mFAS DH domain. The interval 8–306 (LSGSQVPGAT…LEGLTMSPIA (299 aa)) is dehydratase (DH). Residues 153-311 (LRPVSISPFY…MSPIAPSTEK (159 aa)) are C-terminal hotdog fold. A ketoreductase (KR) region spans residues 532-720 (QIRFLRAPFD…VQGGRLLIPR (189 aa)).

It carries out the reaction fumagillol + NADP(+) = 5-dehydrofumagillol + NADPH + H(+). It functions in the pathway secondary metabolite biosynthesis; terpenoid biosynthesis. Stereoselective keto-reductase; part of the gene cluster that mediates the biosynthesis of fumagillin, a meroterpenoid that has numerous biological activities including irreversible inhibition of human type 2 methionine aminopeptidase (METAP2). Within the pathway, the keto-reductase af490 acts as a 5-dehydrofumagillol 5-reductase that stereoselectively reduces 5-keto-fumagillol to 5R-hydroxy-seco-sesquiterpene. The pathway begins with the conversion of farnesyl pyrophosphate (FPP) to beta-trans-bergamotene by the membrane-bound beta-trans-bergamotene synthase af520. The multifunctional cytochrome P450 monooxygenase af510 then converts beta-trans-bergamotene into 5-keto-demethoxyfumagillol via several oxydation steps. 5-keto-demethoxyfumagillol is then subjected to successive C-6 hydroxylation and O-methylation by the dioxygenase af480 and O-methyltransferase af390-400, respectively, to yield 5-keto-fumagillol, which is then stereoselectively reduced by the keto-reductase af490 to 5R-hydroxy-seco-sesquiterpene. The next step is the polyketide transferase af380-catalyzed transfer of a dodecapentaenoyl group synthesized by the polyketide synthase af370 onto 5R-hydroxy-seco-sesquiterpene which leads to the production of prefumagillin. Finally, oxidative cleavage by the monooxygenase af470 converts prefumagillin to fumagillin. The sequence is that of Stereoselective keto-reductase af490 from Aspergillus fumigatus (strain ATCC MYA-4609 / CBS 101355 / FGSC A1100 / Af293) (Neosartorya fumigata).